A 368-amino-acid chain; its full sequence is Cystathionine beta-lyase (368 aa).

An N6-(pyridoxal phosphate)lysine modification is found at lysine 221.

The protein belongs to the class-II pyridoxal-phosphate-dependent aminotransferase family. MalY/PatB cystathionine beta-lyase subfamily. Pyridoxal 5'-phosphate serves as cofactor.

It carries out the reaction L,L-cystathionine + H2O = L-homocysteine + pyruvate + NH4(+). The enzyme catalyses an S-substituted L-cysteine + H2O = a thiol + pyruvate + NH4(+). Its pathway is amino-acid biosynthesis; L-methionine biosynthesis via de novo pathway; L-homocysteine from L-cystathionine: step 1/1. In terms of biological role, catalyzes the transformation of cystathionine to homocysteine. The protein is Cystathionine beta-lyase (metC) of Corynebacterium glutamicum (Brevibacterium saccharolyticum).